Reading from the N-terminus, the 296-residue chain is MPEGKIIKALSGFYYVLDESQDKIIQCRGRGIFRKNKITPLVGDYAVYQAENDKEGYLLEIKERTNELIRPPISNVDQAVLVFSAVQPAFSTSLLDRFLVLVEANGIHPIICITKMDLAADGESKEAILSYVKDYQAIGYDVYVTSSKENSGLTGIVKHFENKTTVFAGQSGVGKSSLLNAISPELELKTNEISTHLGRGKHTTRHVELIHTSGGLVADTPGFSSLEFTGIEEEELGSTFPEIREISASCKFRGCLHLKEPKCAVKQAVEEGEIQPYRYEHYKEFMQEIKERKPRY.

In terms of domain architecture, CP-type G spans 65 to 226; sequence TNELIRPPIS…VADTPGFSSL (162 aa). Residues 114 to 117 and 169 to 177 contribute to the GTP site; these read TKMD and GQSGVGKSS. Zn(2+) is bound by residues cysteine 250, cysteine 255, histidine 257, and cysteine 263.

The protein belongs to the TRAFAC class YlqF/YawG GTPase family. RsgA subfamily. As to quaternary structure, monomer. Associates with 30S ribosomal subunit, binds 16S rRNA. The cofactor is Zn(2+).

It localises to the cytoplasm. In terms of biological role, one of several proteins that assist in the late maturation steps of the functional core of the 30S ribosomal subunit. Helps release RbfA from mature subunits. May play a role in the assembly of ribosomal proteins into the subunit. Circularly permuted GTPase that catalyzes slow GTP hydrolysis, GTPase activity is stimulated by the 30S ribosomal subunit. This is Small ribosomal subunit biogenesis GTPase RsgA from Bacillus velezensis (strain DSM 23117 / BGSC 10A6 / LMG 26770 / FZB42) (Bacillus amyloliquefaciens subsp. plantarum).